The sequence spans 503 residues: Cytochrome P450 7A1 (503 aa).

The chain crosses the membrane as a helical span at residues 4–24 (ISLIWGIAVVVSCCIWFIIGI). Cys-444 contributes to the heme binding site.

It belongs to the cytochrome P450 family. Heme serves as cofactor.

It localises to the endoplasmic reticulum membrane. The protein resides in the microsome membrane. It carries out the reaction cholesterol + reduced [NADPH--hemoprotein reductase] + O2 = 7alpha-hydroxycholesterol + oxidized [NADPH--hemoprotein reductase] + H2O + H(+). It catalyses the reaction 4beta-hydroxycholesterol + reduced [NADPH--hemoprotein reductase] + O2 = 4beta,7alpha-dihydroxycholesterol + oxidized [NADPH--hemoprotein reductase] + H2O + H(+). The enzyme catalyses lathosterol + reduced [NADPH--hemoprotein reductase] + O2 = 7alpha,8alpha-epoxy-5alpha-cholestan-3beta-ol + oxidized [NADPH--hemoprotein reductase] + H2O + H(+). The catalysed reaction is lathosterol + reduced [NADPH--hemoprotein reductase] + O2 = 5alpha-cholestan-7-oxo-3beta-ol + oxidized [NADPH--hemoprotein reductase] + H2O + H(+). It carries out the reaction 7-dehydrocholesterol + reduced [NADPH--hemoprotein reductase] + O2 = 7-oxocholesterol + oxidized [NADPH--hemoprotein reductase] + H2O + H(+). It catalyses the reaction (24S)-hydroxycholesterol + reduced [NADPH--hemoprotein reductase] + O2 = (24S)-7alpha-dihydroxycholesterol + oxidized [NADPH--hemoprotein reductase] + H2O + H(+). The enzyme catalyses (24R)-hydroxycholesterol + reduced [NADPH--hemoprotein reductase] + O2 = (24R)-7alpha-dihydroxycholesterol + oxidized [NADPH--hemoprotein reductase] + H2O + H(+). It functions in the pathway lipid metabolism; bile acid biosynthesis. It participates in steroid metabolism; cholesterol degradation. Functionally, a cytochrome P450 monooxygenase involved in the metabolism of endogenous cholesterol and its oxygenated derivatives (oxysterols). Mechanistically, uses molecular oxygen inserting one oxygen atom into a substrate, and reducing the second into a water molecule, with two electrons provided by NADPH via cytochrome P450 reductase (CPR; NADPH-ferrihemoprotein reductase). Functions as a critical regulatory enzyme of bile acid biosynthesis and cholesterol homeostasis. Catalyzes the hydroxylation of carbon hydrogen bond at 7-alpha position of cholesterol, a rate-limiting step in cholesterol catabolism and bile acid biosynthesis. 7-alpha hydroxylates several oxysterols, including 4beta-hydroxycholesterol and 24-hydroxycholesterol. Catalyzes the oxidation of the 7,8 double bond of 7-dehydrocholesterol and lathosterol with direct and predominant formation of the 7-keto derivatives. The protein is Cytochrome P450 7A1 of Mus musculus (Mouse).